A 121-amino-acid chain; its full sequence is Small ribosomal subunit protein uS13 (121 aa).

A disordered region spans residues 91 to 121 (HRRGLPTRGQNTKNNARTRKGPVKTVANKKK). The segment covering 106 to 121 (ARTRKGPVKTVANKKK) has biased composition (basic residues).

It belongs to the universal ribosomal protein uS13 family. As to quaternary structure, part of the 30S ribosomal subunit. Forms a loose heterodimer with protein S19. Forms two bridges to the 50S subunit in the 70S ribosome.

Functionally, located at the top of the head of the 30S subunit, it contacts several helices of the 16S rRNA. In the 70S ribosome it contacts the 23S rRNA (bridge B1a) and protein L5 of the 50S subunit (bridge B1b), connecting the 2 subunits; these bridges are implicated in subunit movement. Contacts the tRNAs in the A and P-sites. This chain is Small ribosomal subunit protein uS13, found in Macrococcus caseolyticus (strain JCSC5402) (Macrococcoides caseolyticum).